We begin with the raw amino-acid sequence, 190 residues long: Protein GrpE (190 aa).

Positions 1 to 26 are enriched in basic and acidic residues; the sequence is MADKEKDAVIVDETEHVDVDSKESKK. Residues 1–31 are disordered; the sequence is MADKEKDAVIVDETEHVDVDSKESKKEKKTK.

This sequence belongs to the GrpE family. As to quaternary structure, homodimer.

The protein localises to the cytoplasm. Functionally, participates actively in the response to hyperosmotic and heat shock by preventing the aggregation of stress-denatured proteins, in association with DnaK and GrpE. It is the nucleotide exchange factor for DnaK and may function as a thermosensor. Unfolded proteins bind initially to DnaJ; upon interaction with the DnaJ-bound protein, DnaK hydrolyzes its bound ATP, resulting in the formation of a stable complex. GrpE releases ADP from DnaK; ATP binding to DnaK triggers the release of the substrate protein, thus completing the reaction cycle. Several rounds of ATP-dependent interactions between DnaJ, DnaK and GrpE are required for fully efficient folding. This Acholeplasma laidlawii (strain PG-8A) protein is Protein GrpE.